We begin with the raw amino-acid sequence, 513 residues long: MQLNPSEISELLKSRIEGLGASTDVRTQGTVVSVTDGITRIHGLSDVMQGEMLEFPNNVFGVALNLERDSVGAVVLGDYTGVSEGDQVKTTGRILEVPVGPELKGRVVNTLGDAIDGKGPINTTQTDIIEKVAPGVIARRSVSQPLQTGIKAIDSMVPIGRGQRELIIGDRQTGKTAVAVDTIISQKGKGVTCVYVAIGQKASTINNVVRKLEEHGAMEYTIVVAAAASDSAAMQYMAAYAGCTMGEYFRDRGEDALIVYDDLTKQAWAYRQVSLLLRRPPGREAYPGDVFYLHSRLLERAARVNEEYVEKFTNGAVKGKTGSLTALPIIETQAGDVSAFVPTNVISITDGQIFLETDLFNAGVRPAINAGISVSRVGGAAQTKVIKKLSGGIRTDLAQYRELAAFAQFASDLDDATRRQLERGKRVVELLKQPQYQPLQVWELAVSLYAVNNGYLDDVDVAQILAFEKSLKDHLKAKHAALIQRIEDTKELSKDDEAELAAAVQDFKKHGAF.

169 to 176 (GDRQTGKT) lines the ATP pocket.

It belongs to the ATPase alpha/beta chains family. F-type ATPases have 2 components, CF(1) - the catalytic core - and CF(0) - the membrane proton channel. CF(1) has five subunits: alpha(3), beta(3), gamma(1), delta(1), epsilon(1). CF(0) has three main subunits: a(1), b(2) and c(9-12). The alpha and beta chains form an alternating ring which encloses part of the gamma chain. CF(1) is attached to CF(0) by a central stalk formed by the gamma and epsilon chains, while a peripheral stalk is formed by the delta and b chains.

The protein resides in the cell inner membrane. The catalysed reaction is ATP + H2O + 4 H(+)(in) = ADP + phosphate + 5 H(+)(out). Its function is as follows. Produces ATP from ADP in the presence of a proton gradient across the membrane. The alpha chain is a regulatory subunit. The chain is ATP synthase subunit alpha from Bordetella pertussis (strain Tohama I / ATCC BAA-589 / NCTC 13251).